The primary structure comprises 376 residues: S-adenosylmethionine synthase (376 aa).

Residue H14 coordinates ATP. Residue D16 coordinates Mg(2+). Residue E42 participates in K(+) binding. Residues E55 and Q98 each contribute to the L-methionine site. The flexible loop stretch occupies residues 98-108; sequence QSPEIALGISS. ATP-binding positions include 158-160, 224-225, D233, 239-240, A256, and K260; these read DGK, RF, and RK. Residue D233 coordinates L-methionine. K264 is an L-methionine binding site.

This sequence belongs to the AdoMet synthase family. Homotetramer; dimer of dimers. Requires Mg(2+) as cofactor. K(+) is required as a cofactor.

Its subcellular location is the cytoplasm. It carries out the reaction L-methionine + ATP + H2O = S-adenosyl-L-methionine + phosphate + diphosphate. Its pathway is amino-acid biosynthesis; S-adenosyl-L-methionine biosynthesis; S-adenosyl-L-methionine from L-methionine: step 1/1. In terms of biological role, catalyzes the formation of S-adenosylmethionine (AdoMet) from methionine and ATP. The overall synthetic reaction is composed of two sequential steps, AdoMet formation and the subsequent tripolyphosphate hydrolysis which occurs prior to release of AdoMet from the enzyme. This chain is S-adenosylmethionine synthase, found in Aquifex aeolicus (strain VF5).